A 359-amino-acid chain; its full sequence is 4-hydroxy-3-methylbut-2-en-1-yl diphosphate synthase (flavodoxin) (359 aa).

[4Fe-4S] cluster is bound by residues C264, C267, C299, and E306.

The protein belongs to the IspG family. It depends on [4Fe-4S] cluster as a cofactor.

It carries out the reaction (2E)-4-hydroxy-3-methylbut-2-enyl diphosphate + oxidized [flavodoxin] + H2O + 2 H(+) = 2-C-methyl-D-erythritol 2,4-cyclic diphosphate + reduced [flavodoxin]. It functions in the pathway isoprenoid biosynthesis; isopentenyl diphosphate biosynthesis via DXP pathway; isopentenyl diphosphate from 1-deoxy-D-xylulose 5-phosphate: step 5/6. Its function is as follows. Converts 2C-methyl-D-erythritol 2,4-cyclodiphosphate (ME-2,4cPP) into 1-hydroxy-2-methyl-2-(E)-butenyl 4-diphosphate. The polypeptide is 4-hydroxy-3-methylbut-2-en-1-yl diphosphate synthase (flavodoxin) (Helicobacter pylori (strain P12)).